Here is a 228-residue protein sequence, read N- to C-terminus: Protein K8.1 (228 aa).

Positions 1-26 (MSSTQIRTEIPVALLILCLCLVACHA) are cleaved as a signal peptide. N-linked (GlcNAc...) asparagine; by host glycans are attached at residues N55, N60, N70, and N85. The disordered stretch occupies residues 77–113 (GSPSSEYPNVSVSVEDTSASGSGEDAIDESGSGEEER). Positions 78–97 (SPSSEYPNVSVSVEDTSASG) are enriched in polar residues. The chain crosses the membrane as a helical span at residues 197-217 (LYILWAVGLLLGLVLILYLCV).

Its subcellular location is the host membrane. This Human herpesvirus 8 type P (isolate GK18) (HHV-8) protein is Protein K8.1 (K8.1).